Consider the following 351-residue polypeptide: Anthranilate phosphoribosyltransferase (351 aa).

5-phospho-alpha-D-ribose 1-diphosphate-binding positions include G80, 83–84, T88, 90–93, 108–116, and S120; these read GD, NVST, and KHGNRSVTS. G80 provides a ligand contact to anthranilate. Residue S92 participates in Mg(2+) binding. N111 is a binding site for anthranilate. R166 is an anthranilate binding site. The Mg(2+) site is built by D229 and E230.

This sequence belongs to the anthranilate phosphoribosyltransferase family. As to quaternary structure, homodimer. Mg(2+) serves as cofactor.

The catalysed reaction is N-(5-phospho-beta-D-ribosyl)anthranilate + diphosphate = 5-phospho-alpha-D-ribose 1-diphosphate + anthranilate. It participates in amino-acid biosynthesis; L-tryptophan biosynthesis; L-tryptophan from chorismate: step 2/5. Functionally, catalyzes the transfer of the phosphoribosyl group of 5-phosphorylribose-1-pyrophosphate (PRPP) to anthranilate to yield N-(5'-phosphoribosyl)-anthranilate (PRA). The chain is Anthranilate phosphoribosyltransferase from Prosthecochloris aestuarii (strain DSM 271 / SK 413).